A 263-amino-acid chain; its full sequence is Small ribosomal subunit protein eS4 (263 aa).

In terms of domain architecture, S4 RNA-binding spans 42–104 (LPLVIFLRNR…TNELFRLIYD (63 aa)).

Belongs to the eukaryotic ribosomal protein eS4 family.

This Bombyx mori (Silk moth) protein is Small ribosomal subunit protein eS4 (RpS4).